The sequence spans 449 residues: Plasmepsin IV (449 aa).

Topologically, residues methionine 1–lysine 37 are cytoplasmic. Positions methionine 1–glycine 121 are excised as a propeptide. Residues leucine 38–isoleucine 58 form a helical; Signal-anchor for type II membrane protein membrane-spanning segment. Over glycine 59 to leucine 449 the chain is Lumenal. In terms of domain architecture, Peptidase A1 spans phenylalanine 137 to alanine 444. Aspartate 155 is an active-site residue. Cysteine 168 and cysteine 173 are joined by a disulfide. Aspartate 335 is an active-site residue. An intrachain disulfide couples cysteine 370 to cysteine 406.

Belongs to the peptidase A1 family. In terms of assembly, component of the hemozoin formation complex (HFC) composed of falcipains FP2A and/or FP2B, plasmepsins PMII, PMIII/HAP and PMIV, heme detoxifying protein HDP and falcilysin FLN. The HFC complex is involved in hemoglobin degradation and detoxification of heme in the food vacuole during the asexual blood stage. Post-translationally, proteolytically cleaved into the soluble active mature form by cysteine proteases in the digestive vacuole of trophozoites. Proteolysis requires an acidic environment. Autoprocessing or transprocessing by other plasmepsins such as PMII may serve as an alternate activation system.

It is found in the membrane. Its subcellular location is the vacuole lumen. It catalyses the reaction Hydrolysis of the bonds linking certain hydrophobic residues in hemoglobin or globin. Also cleaves small molecules substrates such as Ala-Leu-Glu-Arg-Thr-Phe-|-Phe(NO2)-Ser-Phe-Pro-Thr.. Its activity is regulated as follows. Inhibited by pepstatin A. In terms of biological role, during the asexual blood stage, catalyzes the cleavage of denatured host hemoglobin (Hb) or globins. Digestion of host Hb is an essential step which provides the parasite with amino acids for protein synthesis, and regulates osmolarity. The protein is Plasmepsin IV of Plasmodium falciparum (isolate HB3).